A 340-amino-acid polypeptide reads, in one-letter code: Methionine import ATP-binding protein MetN (340 aa).

The region spanning 2–241 is the ABC transporter domain; the sequence is IRIENLTKIY…PQSSVAKEFI (240 aa). 38–45 lines the ATP pocket; it reads GLSGAGKS.

The protein belongs to the ABC transporter superfamily. Methionine importer (TC 3.A.1.24) family. The complex is composed of two ATP-binding proteins (MetN), two transmembrane proteins (MetI) and a solute-binding protein (MetQ).

It localises to the cell membrane. The enzyme catalyses L-methionine(out) + ATP + H2O = L-methionine(in) + ADP + phosphate + H(+). It catalyses the reaction D-methionine(out) + ATP + H2O = D-methionine(in) + ADP + phosphate + H(+). Its function is as follows. Part of the ABC transporter complex MetNIQ involved in methionine import. Responsible for energy coupling to the transport system. This chain is Methionine import ATP-binding protein MetN, found in Desulfitobacterium hafniense (strain Y51).